Here is a 142-residue protein sequence, read N- to C-terminus: Small ribosomal subunit protein uS12 (142 aa).

This sequence belongs to the universal ribosomal protein uS12 family. As to quaternary structure, part of the 30S ribosomal subunit.

Its function is as follows. With S4 and S5 plays an important role in translational accuracy. Located at the interface of the 30S and 50S subunits. In Thermoplasma volcanium (strain ATCC 51530 / DSM 4299 / JCM 9571 / NBRC 15438 / GSS1), this protein is Small ribosomal subunit protein uS12.